The sequence spans 757 residues: Chloride anion exchanger (757 aa).

The Cytoplasmic portion of the chain corresponds to 1–71 (MIEAIGNQYV…SWLPAYKIKE (71 aa)). Residues 72–92 (WLLSDIVSGISTGLVAVLQGL) form a helical membrane-spanning segment. Residue Ala93 is a topological domain, extracellular. Residues 94–114 (FALLVNIPPAYGLYAAFFPVI) traverse the membrane as a helical segment. Topologically, residues 115 to 124 (TYFFLGTSRH) are cytoplasmic. A helical membrane pass occupies residues 125-145 (ISVGPFPVLSMMVGVVVTRVA). Topologically, residues 146–176 (SGSDTSPALSSSSAENDSMIEEKVMVAASVT) are extracellular. Asn161 carries N-linked (GlcNAc...) asparagine glycosylation. The helical transmembrane segment at 177–197 (VLSGIIQLLLGVLQIGFVVIY) threads the bilayer. Topologically, residues 198–201 (LSES) are cytoplasmic. A helical membrane pass occupies residues 202–222 (LISGFTTAAAIHVLVSQLKFM). Over 223 to 250 (LQLTVPAHSDPFSIFKVLESVFSQIQKT) the chain is Extracellular. Residues 251 to 271 (NIADLVTSVIILVVVFVVKEI) traverse the membrane as a helical segment. At 272–278 (NQRYRSK) the chain is on the cytoplasmic side. The chain crosses the membrane as a helical span at residues 279-299 (LPVPIPIELIMTVIATGISYG). Residues 300 to 335 (CNFEQRFGVAVVGNMSLGFQPPITPSVEVFQDTIGD) lie on the Extracellular side of the membrane. Residues 336-356 (CFGIAIVGFAVAFSVASVYSL) traverse the membrane as a helical segment. At 357-367 (KYDYPIDGNQE) the chain is on the cytoplasmic side. A helical membrane pass occupies residues 368-388 (LIALGVSNIFTGAFKGFAGST). The Extracellular portion of the chain corresponds to 389-404 (ALSRSGVQESTGGKTQ). A helical membrane pass occupies residues 405 to 425 (VAGLLSAVIVLIVIVAIGFLL). Topologically, residues 426 to 462 (QPLQKSVLAALALGNLKGMLMQFAEIGRLWKKDKYDC) are cytoplasmic. A helical transmembrane segment spans residues 463 to 483 (LIWIMTFIFAIVLGLGLGLAA). Topologically, residues 484–757 (SVAFQLLTIV…ECQVPVETKF (274 aa)) are extracellular. In terms of domain architecture, STAS spans 518–713 (NYADVYEPEG…LTIHDAILHI (196 aa)). Positions 754-757 (ETKF) match the PDZ-binding motif.

This sequence belongs to the SLC26A/SulP transporter (TC 2.A.53) family. In terms of assembly, interacts with PDZK1, CFTR, SLC26A6 and NHERF1. Interacts (via PDZ-binding motif) with NHERF4 (via the third PDZ domain); interaction leads to decreased expression of SLC26A3 on the cell membrane resulting in its reduced exchanger activity. In terms of processing, N-glycosylation is required for efficient cell surface expression, and protection from proteolytic degradation.

The protein resides in the apical cell membrane. It localises to the membrane. Its subcellular location is the cell membrane. The enzyme catalyses hydrogencarbonate(in) + 2 chloride(out) = hydrogencarbonate(out) + 2 chloride(in). Functionally, mediates chloride-bicarbonate exchange with a chloride bicarbonate stoichiometry of 2:1 in the intestinal epithelia. Plays a role in the chloride and bicarbonate homeostasis during sperm epididymal maturation and capacitation. The polypeptide is Chloride anion exchanger (Slc26a3) (Rattus norvegicus (Rat)).